The chain runs to 440 residues: Asparagine--tRNA ligase (440 aa).

This sequence belongs to the class-II aminoacyl-tRNA synthetase family. Homodimer.

Its subcellular location is the cytoplasm. The enzyme catalyses tRNA(Asn) + L-asparagine + ATP = L-asparaginyl-tRNA(Asn) + AMP + diphosphate + H(+). This chain is Asparagine--tRNA ligase, found in Chloroflexus aurantiacus (strain ATCC 29364 / DSM 637 / Y-400-fl).